Here is a 221-residue protein sequence, read N- to C-terminus: Probable transaldolase (221 aa).

The Schiff-base intermediate with substrate role is filled by lysine 87.

This sequence belongs to the transaldolase family. Type 3B subfamily.

The protein resides in the cytoplasm. The catalysed reaction is D-sedoheptulose 7-phosphate + D-glyceraldehyde 3-phosphate = D-erythrose 4-phosphate + beta-D-fructose 6-phosphate. It functions in the pathway carbohydrate degradation; pentose phosphate pathway; D-glyceraldehyde 3-phosphate and beta-D-fructose 6-phosphate from D-ribose 5-phosphate and D-xylulose 5-phosphate (non-oxidative stage): step 2/3. Functionally, transaldolase is important for the balance of metabolites in the pentose-phosphate pathway. The polypeptide is Probable transaldolase (Syntrophobacter fumaroxidans (strain DSM 10017 / MPOB)).